The primary structure comprises 121 residues: Chorion class CA protein ERA.4 (121 aa).

The N-terminal stretch at 1-23 (MSSSFFCFFLFCFQTCLIQNVYS) is a signal peptide. The segment at 24 to 57 (QCLGRVGPGGPPLGPYGGPLGGPGYGPVGYGGCG) is left arm. Residues 58–105 (GYGGSGIGNVAVAGELPVAGSAAVLGQVPVIGAVEFAGPACAVGSVSI) are central domain. The interval 106-121 (SGACGPTCGCGGSPYY) is right arm.

It belongs to the chorion protein family.

In terms of biological role, this protein is one of many from the eggshell of the silk moth. The protein is Chorion class CA protein ERA.4 (ERA.4) of Bombyx mori (Silk moth).